We begin with the raw amino-acid sequence, 422 residues long: uncharacterized protein (422 aa).

A disordered region spans residues 1–22; sequence MIQNNPKSIGSSSNKSARSSGS. Residues 7–22 show a composition bias toward low complexity; it reads KSIGSSSNKSARSSGS.

This is an uncharacterized protein from Acanthamoeba polyphaga mimivirus (APMV).